The chain runs to 307 residues: Homoserine O-acetyltransferase (307 aa).

Cys142 serves as the catalytic Acyl-thioester intermediate. Substrate contacts are provided by Lys163 and Ser192. Catalysis depends on His235, which acts as the Proton acceptor. Residue Glu237 is part of the active site. Substrate is bound at residue Arg249.

Belongs to the MetA family.

Its subcellular location is the cytoplasm. It catalyses the reaction L-homoserine + acetyl-CoA = O-acetyl-L-homoserine + CoA. It functions in the pathway amino-acid biosynthesis; L-methionine biosynthesis via de novo pathway; O-acetyl-L-homoserine from L-homoserine: step 1/1. Functionally, transfers an acetyl group from acetyl-CoA to L-homoserine, forming acetyl-L-homoserine. This Sinorhizobium fredii (strain NBRC 101917 / NGR234) protein is Homoserine O-acetyltransferase.